The sequence spans 313 residues: Carbamate kinase 2 (313 aa).

The protein belongs to the carbamate kinase family.

The protein localises to the cytoplasm. The enzyme catalyses hydrogencarbonate + NH4(+) + ATP = carbamoyl phosphate + ADP + H2O + H(+). It participates in metabolic intermediate metabolism; carbamoyl phosphate degradation; CO(2) and NH(3) from carbamoyl phosphate: step 1/1. The chain is Carbamate kinase 2 (arcC2) from Staphylococcus aureus (strain bovine RF122 / ET3-1).